Reading from the N-terminus, the 212-residue chain is Thymidylate kinase (212 aa).

7–14 (GIEGSGKS) contributes to the ATP binding site.

Belongs to the thymidylate kinase family.

The enzyme catalyses dTMP + ATP = dTDP + ADP. Its function is as follows. Phosphorylation of dTMP to form dTDP in both de novo and salvage pathways of dTTP synthesis. This Oleidesulfovibrio alaskensis (strain ATCC BAA-1058 / DSM 17464 / G20) (Desulfovibrio alaskensis) protein is Thymidylate kinase.